The chain runs to 123 residues: Small ribosomal subunit protein uS12c (123 aa).

This sequence belongs to the universal ribosomal protein uS12 family. As to quaternary structure, part of the 30S ribosomal subunit.

It localises to the plastid. It is found in the chloroplast. With S4 and S5 plays an important role in translational accuracy. Located at the interface of the 30S and 50S subunits. This is Small ribosomal subunit protein uS12c (rps12) from Pinus thunbergii (Japanese black pine).